The following is a 157-amino-acid chain: Alpha-amylase/trypsin inhibitor RA16 (157 aa).

A signal peptide spans 1–26 (MASNKVVISALLVVVVSVLAATTTMA). Cystine bridges form between cysteine 41/cysteine 89, cysteine 55/cysteine 77, cysteine 63/cysteine 121, cysteine 78/cysteine 137, and cysteine 91/cysteine 149.

It belongs to the cereal trypsin/alpha-amylase inhibitor family. Post-translationally, five disulfide bonds are present.

Its subcellular location is the secreted. In terms of biological role, seed storage protein. This Oryza sativa subsp. japonica (Rice) protein is Alpha-amylase/trypsin inhibitor RA16.